The following is a 142-amino-acid chain: Hemoglobin subunit alpha (142 aa).

Residues 2 to 142 (VLSSADKNNV…VSTVLTSKYR (141 aa)) enclose the Globin domain. A Phosphoserine modification is found at Ser4. N6-succinyllysine is present on residues Lys8 and Lys12. N6-acetyllysine; alternate is present on Lys17. Position 17 is an N6-succinyllysine; alternate (Lys17). The residue at position 25 (Tyr25) is a Phosphotyrosine. Ser36 is modified (phosphoserine). Lys41 is subject to N6-succinyllysine. Position 50 is a phosphoserine (Ser50). Residue His59 coordinates O2. His88 serves as a coordination point for heme b. At Ser103 the chain carries Phosphoserine. Thr109 is modified (phosphothreonine). Phosphoserine is present on Ser125. 2 positions are modified to phosphothreonine: Thr135 and Thr138. Ser139 bears the Phosphoserine mark.

It belongs to the globin family. In terms of assembly, heterotetramer of two alpha chains and two beta chains. As to expression, red blood cells.

Involved in oxygen transport from the lung to the various peripheral tissues. Its function is as follows. Hemopressin acts as an antagonist peptide of the cannabinoid receptor CNR1. Hemopressin-binding efficiently blocks cannabinoid receptor CNR1 and subsequent signaling. This Panthera leo (Lion) protein is Hemoglobin subunit alpha (HBA).